A 293-amino-acid chain; its full sequence is 4-diphosphocytidyl-2-C-methyl-D-erythritol kinase (293 aa).

Residue K10 is part of the active site. 94 to 104 (PVSAGLAGGSS) is a binding site for ATP. D136 is a catalytic residue.

This sequence belongs to the GHMP kinase family. IspE subfamily.

It carries out the reaction 4-CDP-2-C-methyl-D-erythritol + ATP = 4-CDP-2-C-methyl-D-erythritol 2-phosphate + ADP + H(+). It functions in the pathway isoprenoid biosynthesis; isopentenyl diphosphate biosynthesis via DXP pathway; isopentenyl diphosphate from 1-deoxy-D-xylulose 5-phosphate: step 3/6. Its function is as follows. Catalyzes the phosphorylation of the position 2 hydroxy group of 4-diphosphocytidyl-2C-methyl-D-erythritol. The sequence is that of 4-diphosphocytidyl-2-C-methyl-D-erythritol kinase from Listeria monocytogenes serotype 4b (strain CLIP80459).